Consider the following 131-residue polypeptide: Small ribosomal subunit protein uS11 (131 aa).

The protein belongs to the universal ribosomal protein uS11 family. In terms of assembly, part of the 30S ribosomal subunit. Interacts with proteins S7 and S18. Binds to IF-3.

Its function is as follows. Located on the platform of the 30S subunit, it bridges several disparate RNA helices of the 16S rRNA. Forms part of the Shine-Dalgarno cleft in the 70S ribosome. The chain is Small ribosomal subunit protein uS11 from Exiguobacterium sp. (strain ATCC BAA-1283 / AT1b).